The following is a 1538-amino-acid chain: Dicer-like protein 1 (1538 aa).

Residues 39–72 form a disordered region; it reads DPAESSADVHKDEHSSDNSDNDNEAVPKPNDFSQ. Over residues 45–55 the composition is skewed to basic and acidic residues; sequence ADVHKDEHSSD. The Helicase ATP-binding domain occupies 134–315; it reads LFERAKTQNT…EAATRLETLL (182 aa). 147–154 is an ATP binding site; it reads LDTGSGKT. A DEAH box motif is present at residues 260-263; it reads DEAH. The Helicase C-terminal domain occupies 460 to 619; the sequence is ELSKHFSDTT…ETLPEDRILH (160 aa). Residues 652–742 enclose the Dicer dsRNA-binding fold domain; that stretch reads AIAILARYAS…NSIYHRRLPA (91 aa). A PAZ domain is found at 892 to 1020; that stretch reads DTVSFVHNND…ICAEPLRISA (129 aa). 2 consecutive RNase III domains span residues 1044 to 1203 and 1254 to 1406; these read IALE…LSGG and ARHV…VDSK. Positions 1295, 1392, and 1395 each coordinate Mg(2+). The region spanning 1440 to 1508 is the DRBM domain; that stretch reads TFLHNKLTNE…SEKALAVLDG (69 aa). Zn(2+) is bound by residues Cys1452, His1479, Cys1520, and Cys1522.

The protein belongs to the helicase family. Dicer subfamily. Mg(2+) is required as a cofactor. The cofactor is Mn(2+).

Its function is as follows. Dicer-like endonuclease involved in cleaving double-stranded RNA in the RNA interference (RNAi) pathway. Produces 21 to 25 bp dsRNAs (siRNAs) which target the selective destruction of homologous RNAs leading to sequence-specific suppression of gene expression, called post-transcriptional gene silencing (PTGS). Part of a broad host defense response against viral infection and transposons. The protein is Dicer-like protein 1 (dcl1) of Neosartorya fischeri (strain ATCC 1020 / DSM 3700 / CBS 544.65 / FGSC A1164 / JCM 1740 / NRRL 181 / WB 181) (Aspergillus fischerianus).